We begin with the raw amino-acid sequence, 203 residues long: Protein shisa-like-1a (203 aa).

A signal peptide spans 1–25 (MIMNGRWSFNTLAIIFILLSTAALS). The Extracellular portion of the chain corresponds to 26 to 97 (AHFRVCEPYS…SDSFAHNNYT (72 aa)). N-linked (GlcNAc...) asparagine glycosylation is found at asparagine 53, asparagine 63, asparagine 72, asparagine 83, and asparagine 95. A helical transmembrane segment spans residues 98–118 (ALIGVWIYGFFVMVLLALDFL). Topologically, residues 119-203 (YYSAMNYELC…LLSFQTSTAW (85 aa)) are cytoplasmic. The segment at 157 to 191 (ELNTGPGLSQQQQLHLHHHHHHHHPRHSLRGDTQS) is disordered. The segment covering 161 to 170 (GPGLSQQQQL) has biased composition (low complexity). Basic residues predominate over residues 171-184 (HLHHHHHHHHPRHS).

The protein belongs to the shisa family.

It localises to the membrane. In Danio rerio (Zebrafish), this protein is Protein shisa-like-1a (shisal1a).